A 487-amino-acid polypeptide reads, in one-letter code: Cyclic AMP-dependent transcription factor ATF-2 (487 aa).

A C2H2-type zinc finger spans residues 7–31 (FLCTAPGCGQRFTNEDHLAVHKHKH). At T34 the chain carries Phosphothreonine; by PKC/PRKCH. Residue S44 is modified to Phosphoserine. T51 carries the phosphothreonine; by MAPK11 and MAPK14 modification. T53 is modified (phosphothreonine; by MAPK1, MAPK3, MAPK11, MAPK12, MAPK14 and PLK3). The residue at position 55 (T55) is a Phosphothreonine; by VRK1. Residues S72 and S94 each carry the phosphoserine modification. Residue T98 is modified to Phosphothreonine. A Phosphoserine; by PKC/PRKCA and PKC/PRKCB modification is found at S103. Disordered regions lie at residues 106–137 (EEPS…PLAQ) and 241–355 (PGIP…RQKR). S118 is modified (phosphoserine). Residues 264–275 (LTQQHPPVTNGD) show a composition bias toward polar residues. Positions 278 to 281 (KGHG) are essential for its histone acetyltransferase activity. The segment covering 300-316 (PATSTTETPASPAHTTP) has biased composition (low complexity). S310 carries the phosphoserine modification. Phosphoserine; by PKC/PRKCA and PKC/PRKCB is present on S322. A compositionally biased stretch (basic and acidic residues) spans 328 to 345 (AANEDPDEKRRKFLERNR). The 64-residue stretch at 334 to 397 (DEKRRKFLER…AQLKQLLLAH (64 aa)) folds into the bZIP domain. Positions 336–356 (KRRKFLERNRAAASRCRQKRK) are basic motif. K339 is subject to N6-acetyllysine. S349 carries the post-translational modification Phosphoserine; by PKC/PRKCA and PKC/PRKCB. K356 carries the N6-acetyllysine modification. The tract at residues 362–390 (LEKKAEDLSSLNGQLQSEVTLLRNEVAQL) is leucine-zipper. The Nuclear export signal signature appears at 387–396 (VAQLKQLLLA). Residues 407–453 (KKSGYHTADKDDSSEDLSVPSSPHTEAIQHSSVSTSNGVSSTSKAEA) form a disordered region. A phosphoserine mark is found at S424 and S428. Residues 425 to 436 (VPSSPHTEAIQH) show a composition bias toward polar residues. Low complexity predominate over residues 437–449 (SSVSTSNGVSSTS). A phosphoserine; by ATM mark is found at S472 and S480.

This sequence belongs to the bZIP family. ATF subfamily. Binds DNA as a dimer and can form a homodimer in the absence of DNA. Can form a heterodimer with JUN. Heterodimerization is essential for its transcriptional activity. Interacts with SMAD3 and SMAD4. Interacts with the HK1/VDAC1 complex. Interacts with NBN, MRE11, XPO1, KAT5 and CUL3. Binds through its N-terminal region to UTF1 which acts as a coactivator of ATF2 transcriptional activity. Phosphorylation of Thr-51 by MAPK14 and MAPK11, and at Thr-53 by MAPK1/ERK2, MAPK3/ERK1, MAPK11, MAPK12 and MAPK14 in response to external stimulus like insulin causes increased transcriptional activity. Phosphorylated by PLK3 following hyperosmotic stress. Also phosphorylated and activated by JNK and CaMK4. ATM-mediated phosphorylation at Ser-472 and Ser-480 stimulates its function in DNA damage response. Phosphorylation at Ser-44, Thr-55 and Ser-103 activates its transcriptional activity. Phosphorylation at Thr-51 or Thr-53 enhances acetylation of histones H2B and H4.

Its subcellular location is the nucleus. It localises to the cytoplasm. It is found in the mitochondrion outer membrane. In terms of biological role, transcriptional activator which regulates the transcription of various genes, including those involved in anti-apoptosis, cell growth, and DNA damage response. Dependent on its binding partner, binds to CRE (cAMP response element) consensus sequences (5'-TGACGTCA-3') or to AP-1 (activator protein 1) consensus sequences (5'-TGACTCA-3'). In the nucleus, contributes to global transcription and the DNA damage response, in addition to specific transcriptional activities that are related to cell development, proliferation and death. In the cytoplasm, interacts with and perturbs HK1- and VDAC1-containing complexes at the mitochondrial outer membrane, thereby impairing mitochondrial membrane potential, inducing mitochondrial leakage and promoting cell death. The phosphorylated form (mediated by ATM) plays a role in the DNA damage response and is involved in the ionizing radiation (IR)-induced S phase checkpoint control and in the recruitment of the MRN complex into the IR-induced foci (IRIF). Exhibits histone acetyltransferase (HAT) activity which specifically acetylates histones H2B and H4 in vitro. In concert with CUL3 and RBX1, promotes the degradation of KAT5 thereby attenuating its ability to acetylate and activate ATM. Can elicit oncogenic or tumor suppressor activities depending on the tissue or cell type. This chain is Cyclic AMP-dependent transcription factor ATF-2 (Atf2), found in Mus musculus (Mouse).